We begin with the raw amino-acid sequence, 226 residues long: UPF0173 metal-dependent hydrolase GTNG_2675 (226 aa).

The protein belongs to the UPF0173 family.

The polypeptide is UPF0173 metal-dependent hydrolase GTNG_2675 (Geobacillus thermodenitrificans (strain NG80-2)).